A 645-amino-acid polypeptide reads, in one-letter code: ATP-dependent zinc metalloprotease FtsH (645 aa).

Over 1 to 8 (MDFNREHK) the chain is Cytoplasmic. The helical transmembrane segment at 9–29 (INFLYVLAAMVGVLLIQSLVS) threads the bilayer. Over 30–105 (QPDHIRTIPY…FSGEPEPGPW (76 aa)) the chain is Periplasmic. The helical transmembrane segment at 106-126 (PTILGWLMPIVGFALVWMFLI) threads the bilayer. Topologically, residues 127 to 645 (RPMSMGPGMD…ALTVEGGEAQ (519 aa)) are cytoplasmic. 199–206 (GPPGTGKT) lines the ATP pocket. Residue His-423 participates in Zn(2+) binding. Glu-424 is a catalytic residue. Residues His-427 and Asp-500 each contribute to the Zn(2+) site. Residues 612-645 (SASVLRDGGDGAADAGQDRSGEHRALTVEGGEAQ) form a disordered region. The span at 627–637 (GQDRSGEHRAL) shows a compositional bias: basic and acidic residues.

In the central section; belongs to the AAA ATPase family. This sequence in the C-terminal section; belongs to the peptidase M41 family. Homohexamer. The cofactor is Zn(2+).

Its subcellular location is the cell inner membrane. Functionally, acts as a processive, ATP-dependent zinc metallopeptidase for both cytoplasmic and membrane proteins. Plays a role in the quality control of integral membrane proteins. This is ATP-dependent zinc metalloprotease FtsH from Paraburkholderia phymatum (strain DSM 17167 / CIP 108236 / LMG 21445 / STM815) (Burkholderia phymatum).